The chain runs to 256 residues: 2,3,4,5-tetrahydropyridine-2,6-dicarboxylate N-acetyltransferase (256 aa).

This sequence belongs to the transferase hexapeptide repeat family. DapH subfamily.

It catalyses the reaction (S)-2,3,4,5-tetrahydrodipicolinate + acetyl-CoA + H2O = L-2-acetamido-6-oxoheptanedioate + CoA. It participates in amino-acid biosynthesis; L-lysine biosynthesis via DAP pathway; LL-2,6-diaminopimelate from (S)-tetrahydrodipicolinate (acetylase route): step 1/3. Its function is as follows. Catalyzes the transfer of an acetyl group from acetyl-CoA to tetrahydrodipicolinate. The sequence is that of 2,3,4,5-tetrahydropyridine-2,6-dicarboxylate N-acetyltransferase from Lactococcus lactis subsp. lactis (strain IL1403) (Streptococcus lactis).